The primary structure comprises 466 residues: Uronate isomerase (466 aa).

The protein belongs to the metallo-dependent hydrolases superfamily. Uronate isomerase family.

It carries out the reaction D-glucuronate = D-fructuronate. It catalyses the reaction aldehydo-D-galacturonate = keto-D-tagaturonate. It participates in carbohydrate metabolism; pentose and glucuronate interconversion. The polypeptide is Uronate isomerase (Brucella canis (strain ATCC 23365 / NCTC 10854 / RM-666)).